The following is a 163-amino-acid chain: Protein-export protein SecB (163 aa).

The protein belongs to the SecB family. As to quaternary structure, homotetramer, a dimer of dimers. One homotetramer interacts with 1 SecA dimer.

The protein resides in the cytoplasm. In terms of biological role, one of the proteins required for the normal export of preproteins out of the cell cytoplasm. It is a molecular chaperone that binds to a subset of precursor proteins, maintaining them in a translocation-competent state. It also specifically binds to its receptor SecA. This is Protein-export protein SecB from Brucella canis (strain ATCC 23365 / NCTC 10854 / RM-666).